The following is a 103-amino-acid chain: Cytochrome c-552 (103 aa).

The signal sequence occupies residues 1 to 22 (MKTAWLGTFAASALLVAGYAQA). Heme c-binding residues include Cys32, Cys35, His36, and Met81.

In terms of assembly, monomer. Binds 1 heme c group covalently per subunit.

The protein localises to the periplasm. Monoheme c-type cytochrome. Probable electron donor to membrane cytochrome oxidase and to periplasmic nitrite reductase. This is Cytochrome c-552 (cyt) from Nitrosomonas europaea (strain ATCC 19718 / CIP 103999 / KCTC 2705 / NBRC 14298).